We begin with the raw amino-acid sequence, 383 residues long: ATP phosphoribosyltransferase regulatory subunit (383 aa).

The protein belongs to the class-II aminoacyl-tRNA synthetase family. HisZ subfamily. Heteromultimer composed of HisG and HisZ subunits.

It localises to the cytoplasm. The protein operates within amino-acid biosynthesis; L-histidine biosynthesis; L-histidine from 5-phospho-alpha-D-ribose 1-diphosphate: step 1/9. In terms of biological role, required for the first step of histidine biosynthesis. May allow the feedback regulation of ATP phosphoribosyltransferase activity by histidine. This Lactiplantibacillus plantarum (strain ATCC BAA-793 / NCIMB 8826 / WCFS1) (Lactobacillus plantarum) protein is ATP phosphoribosyltransferase regulatory subunit.